A 558-amino-acid chain; its full sequence is Two-component response regulator-like APRR5 (558 aa).

A Response regulatory domain is found at 51-169 (RVLLVEADDS…ELRNLWQHVW (119 aa)). The segment at 180–233 (FPWNESVGQQKAEGASANNSNGKRDDHVVSGNGGDAQSSCTRPEMEGESADVEV) is disordered. Residues 240–260 (QMECAKSQFNETRLLANELQS) adopt a coiled-coil conformation. Disordered stretches follow at residues 297–319 (SLRR…HPSS) and 535–558 (KKLA…TQAP). The segment covering 303–319 (ASENQSSGDRPSLHPSS) has biased composition (polar residues). One can recognise a CCT domain in the interval 509–551 (REAALTKFRMKRKDRCYEKKVRYESRKKLAEQRPRIKGQFVRQ).

It belongs to the ARR-like family. In terms of assembly, interacts with ADO1 and ADO2. Interacts with SPY (via N-terminus). In terms of processing, phosphorylation varies throughout the diurnal cycle and enhances ADO1 binding. O-fucosylated by SPY. O-fucosylation promotes APRR5 proteolysis.

The protein resides in the nucleus. Its function is as follows. Transcriptional repressor of CCA1 and LHY, thereby controlling photoperiodic flowering response. Involved in the positive and negative feedback loops of the circadian clock. With RVE8, forms a negative feedback loop of the circadian clock. Expression of several members of the ARR-like family is controlled by circadian rhythm. Proteolytic substrate of the E3 ubiquitin ligase SCF(ADO1) complex. APRR9, APRR7, and APRR5 coordinately act on the upstream region of the target genes to repress their expression from noon until midnight. The particular coordinated sequential expression of APRR9, APRR7, APRR5, APRR3 and APPR1 result to circadian waves that may be at the basis of the endogenous circadian clock. Negative regulator of shade avoidance response. Involved in the inhibition of leaf expansion in shade avoidance response. In Arabidopsis thaliana (Mouse-ear cress), this protein is Two-component response regulator-like APRR5 (APRR5).